The primary structure comprises 290 residues: Putative tyrosine recombinase TTE1313 (290 aa).

Positions 1-85 (MAESVVGEFL…SIKAFYHYLF (85 aa)) constitute a Core-binding (CB) domain. Residues 106–290 (KEPVTLTVEQ…EVYNKFHPRA (185 aa)) form the Tyr recombinase domain. Arg-239 is an active-site residue. Residue Tyr-283 is the O-(3'-phospho-DNA)-tyrosine intermediate of the active site.

It belongs to the 'phage' integrase family.

It localises to the cytoplasm. In terms of biological role, site-specific tyrosine recombinase, which acts by catalyzing the cutting and rejoining of the recombining DNA molecules. The polypeptide is Putative tyrosine recombinase TTE1313 (Caldanaerobacter subterraneus subsp. tengcongensis (strain DSM 15242 / JCM 11007 / NBRC 100824 / MB4) (Thermoanaerobacter tengcongensis)).